Consider the following 500-residue polypeptide: Cytochrome P450 2D20 (500 aa).

Cys-446 is a binding site for heme.

This sequence belongs to the cytochrome P450 family. Heme is required as a cofactor.

It is found in the endoplasmic reticulum membrane. It localises to the microsome membrane. This is Cytochrome P450 2D20 (CYP2D20) from Mesocricetus auratus (Golden hamster).